The primary structure comprises 215 residues: Thiopurine S-methyltransferase (215 aa).

S-adenosyl-L-methionine-binding residues include tryptophan 10, leucine 45, glutamate 66, and arginine 123.

It belongs to the class I-like SAM-binding methyltransferase superfamily. TPMT family.

The protein localises to the cytoplasm. The catalysed reaction is S-adenosyl-L-methionine + a thiopurine = S-adenosyl-L-homocysteine + a thiopurine S-methylether.. The polypeptide is Thiopurine S-methyltransferase (Pseudomonas putida (strain W619)).